We begin with the raw amino-acid sequence, 224 residues long: Heme response regulator HssR (224 aa).

Residues 3 to 116 (QCLVVDDDPR…ELIFRIRAVL (114 aa)) enclose the Response regulatory domain. At Asp-52 the chain carries 4-aspartylphosphate. Positions 124–222 (NSEMTIGNLT…VRGQGYKVEN (99 aa)) form a DNA-binding region, ompR/PhoB-type.

Post-translationally, phosphorylated by HssS.

The protein localises to the cytoplasm. Its function is as follows. Member of the two-component regulatory system HssS/HssR involved in intracellular heme homeostasis and tempering of staphylococcal virulence. Phosphorylated HssR binds to a direct repeat sequence within hrtAB promoter and activates the expression of hrtAB, an efflux pump, in response to extracellular heme, hemin, hemoglobin or blood. The polypeptide is Heme response regulator HssR (hssR) (Staphylococcus aureus (strain Mu50 / ATCC 700699)).